We begin with the raw amino-acid sequence, 67 residues long: DNA-directed RNA polymerase subunit omega (67 aa).

Belongs to the RNA polymerase subunit omega family. As to quaternary structure, the RNAP catalytic core consists of 2 alpha, 1 beta, 1 beta' and 1 omega subunit. When a sigma factor is associated with the core the holoenzyme is formed, which can initiate transcription.

The enzyme catalyses RNA(n) + a ribonucleoside 5'-triphosphate = RNA(n+1) + diphosphate. Promotes RNA polymerase assembly. Latches the N- and C-terminal regions of the beta' subunit thereby facilitating its interaction with the beta and alpha subunits. The polypeptide is DNA-directed RNA polymerase subunit omega (Polynucleobacter asymbioticus (strain DSM 18221 / CIP 109841 / QLW-P1DMWA-1) (Polynucleobacter necessarius subsp. asymbioticus)).